Here is a 480-residue protein sequence, read N- to C-terminus: Ammonium transporter 2 member 4 (480 aa).

Residues 1–27 (MELPSNLLPDEASPEWMNKGDNAWQLT) lie on the Extracellular side of the membrane. Residues 28-48 (AATMVGLQSIPGLVILYGSLV) traverse the membrane as a helical segment. At 49-51 (KKT) the chain is on the cytoplasmic side. The helical transmembrane segment at 52 to 72 (WAINSAFMAFYAFASVLLCWV) threads the bilayer. The Extracellular portion of the chain corresponds to 73 to 113 (SWAYQMSFGEKMVFFLGKPNVALDEKFLLGKAFLGNFPNAT). A glycan (N-linked (GlcNAc...) asparagine) is linked at asparagine 111. The helical transmembrane segment at 114-134 (MVFYQGVFAGLTLILIAGALL) threads the bilayer. At 135–141 (GRMNIRA) the chain is on the cytoplasmic side. Residues 142-162 (WMLFVPLWVTFSYTVVAFSIW) form a helical membrane-spanning segment. Over 163–175 (CPDGWLAKRGVID) the chain is Extracellular. A helical transmembrane segment spans residues 176 to 196 (FAGGYVIHLSAGVAGFTAAYW). At 197–214 (VGPRADKDRETFPAATNN) the chain is on the cytoplasmic side. A helical membrane pass occupies residues 215 to 235 (MIMVLAGAGLLWMGWSGFNGG). The Extracellular segment spans residues 236 to 242 (APFVAST). A helical transmembrane segment spans residues 243-263 (IASLAILNTHVCTAASITVWV). The Cytoplasmic portion of the chain corresponds to 264 to 274 (MLDTFYFGKPT). Residues 275–295 (VFGAVQGMITGLVCITPAAGV) traverse the membrane as a helical segment. Over 296–298 (VQG) the chain is Extracellular. The helical transmembrane segment at 299 to 319 (WAAILMGFISGSIPWYTMMVL) threads the bilayer. Residues 320–334 (HNKVNFLKKIDDPMA) are Cytoplasmic-facing. A helical transmembrane segment spans residues 335-355 (VFHTHAIAGALGGILTGFFAV). The Extracellular portion of the chain corresponds to 356-394 (PKLCRLFYMVPDWEKYIGLAYGLQNKGATQAGLKQMVIQ). Residues 395–415 (IEAIVFVICYNVLMTSLICLI) form a helical membrane-spanning segment. Topologically, residues 416–480 (VRVIVPLRLN…SRSLGELQMV (65 aa)) are cytoplasmic.

Belongs to the ammonia transporter channel (TC 1.A.11.2) family.

Its subcellular location is the cell membrane. Functionally, involved in ammonium transport. May be involved in arbuscular mycorrhizal (AM) symbiosis with AM fungi. This is Ammonium transporter 2 member 4 from Medicago truncatula (Barrel medic).